We begin with the raw amino-acid sequence, 333 residues long: Fe(3+)-citrate import system permease protein YfmD (333 aa).

Transmembrane regions (helical) follow at residues 13 to 33 (LMMF…NLSV), 67 to 87 (TLIG…MQAM), 97 to 117 (IFGV…ILPA), 121 to 141 (SSVI…YMIA), 151 to 171 (LALS…AIII), 201 to 221 (FSVI…VLGL), 238 to 258 (ILIS…AGPI), 279 to 299 (YVLP…DVLA), and 302 to 322 (IAFP…TPFF).

The protein belongs to the binding-protein-dependent transport system permease family. FecCD subfamily. In terms of assembly, the complex is composed of one ATP-binding protein (YfmF), two transmembrane proteins (YfmD and YfmE) and a solute-binding protein (YfmC).

The protein resides in the cell membrane. In terms of biological role, part of the ABC transporter complex YfmCDEF involved in citrate-dependent Fe(3+) import. Involved in the translocation of the substrate across the membrane. In Bacillus subtilis (strain 168), this protein is Fe(3+)-citrate import system permease protein YfmD (yfmD).